Consider the following 358-residue polypeptide: Probable D-xylulose reductase A (358 aa).

Positions 47, 72, and 73 each coordinate Zn(2+). 182–187 (GAGPVG) contributes to the NAD(+) binding site.

The protein belongs to the zinc-containing alcohol dehydrogenase family. Zn(2+) is required as a cofactor.

It carries out the reaction xylitol + NAD(+) = D-xylulose + NADH + H(+). The protein operates within carbohydrate degradation; L-arabinose degradation via L-arabinitol; D-xylulose 5-phosphate from L-arabinose (fungal route): step 4/5. Its function is as follows. Xylitol dehydrogenase which catalyzes the conversion of xylitol to D-xylulose. Xylose is a major component of hemicelluloses such as xylan. Most fungi utilize D-xylose via three enzymatic reactions, xylose reductase (XR), xylitol dehydrogenase (XDH), and xylulokinase, to form xylulose 5-phosphate, which enters pentose phosphate pathway. The polypeptide is Probable D-xylulose reductase A (xdhA) (Aspergillus niger (strain ATCC MYA-4892 / CBS 513.88 / FGSC A1513)).